A 127-amino-acid polypeptide reads, in one-letter code: Modulator protein MzrA (127 aa).

Topologically, residues 1 to 10 (MVISPLALRR) are cytoplasmic. A helical transmembrane segment spans residues 11 to 31 (LSYGLIALVLLSALILVWTAL). Topologically, residues 32–127 (QRQESTLAIR…RLRDTSHRFG (96 aa)) are periplasmic.

It belongs to the MzrA family. As to quaternary structure, interacts with EnvZ.

The protein resides in the cell inner membrane. Functionally, modulates the activity of the EnvZ/OmpR two-component regulatory system, probably by directly modulating EnvZ enzymatic activity and increasing stability of phosphorylated OmpR. The polypeptide is Modulator protein MzrA (Enterobacter sp. (strain 638)).